The primary structure comprises 20 residues: Pregnancy-associated glycoprotein 75 (20 aa).

This sequence belongs to the peptidase A1 family. N-glycosylated. Expressed in chorionic epithelium (trophectoderm).

Its subcellular location is the secreted. The protein is Pregnancy-associated glycoprotein 75 of Bubalus bubalis (Domestic water buffalo).